Consider the following 586-residue polypeptide: Clathrin heavy chain linker domain-containing protein 1 (586 aa).

Positions 174-232 form a coiled coil; sequence MNLDALTKYMKHLEDKYAEIKQAMLIKYVPAQRKADLDEEMIVLLKRRDVAENLNKKLQ.

The polypeptide is Clathrin heavy chain linker domain-containing protein 1 (CLHC1) (Homo sapiens (Human)).